We begin with the raw amino-acid sequence, 183 residues long: ATP synthase subunit delta (183 aa).

It belongs to the ATPase delta chain family. F-type ATPases have 2 components, F(1) - the catalytic core - and F(0) - the membrane proton channel. F(1) has five subunits: alpha(3), beta(3), gamma(1), delta(1), epsilon(1). F(0) has three main subunits: a(1), b(2) and c(10-14). The alpha and beta chains form an alternating ring which encloses part of the gamma chain. F(1) is attached to F(0) by a central stalk formed by the gamma and epsilon chains, while a peripheral stalk is formed by the delta and b chains.

The protein resides in the cell inner membrane. In terms of biological role, f(1)F(0) ATP synthase produces ATP from ADP in the presence of a proton or sodium gradient. F-type ATPases consist of two structural domains, F(1) containing the extramembraneous catalytic core and F(0) containing the membrane proton channel, linked together by a central stalk and a peripheral stalk. During catalysis, ATP synthesis in the catalytic domain of F(1) is coupled via a rotary mechanism of the central stalk subunits to proton translocation. Functionally, this protein is part of the stalk that links CF(0) to CF(1). It either transmits conformational changes from CF(0) to CF(1) or is implicated in proton conduction. The sequence is that of ATP synthase subunit delta from Thermotoga neapolitana (strain ATCC 49049 / DSM 4359 / NBRC 107923 / NS-E).